The chain runs to 82 residues: ATP synthase subunit c, chloroplastic (82 aa).

Transmembrane regions (helical) follow at residues 3 to 23 (PLIA…ASIG) and 57 to 77 (LAFM…LLFA).

The protein belongs to the ATPase C chain family. F-type ATPases have 2 components, F(1) - the catalytic core - and F(0) - the membrane proton channel. F(1) has five subunits: alpha(3), beta(3), gamma(1), delta(1), epsilon(1). F(0) has four main subunits: a(1), b(1), b'(1) and c(10-14). The alpha and beta chains form an alternating ring which encloses part of the gamma chain. F(1) is attached to F(0) by a central stalk formed by the gamma and epsilon chains, while a peripheral stalk is formed by the delta, b and b' chains.

Its subcellular location is the plastid. It is found in the chloroplast thylakoid membrane. Functionally, f(1)F(0) ATP synthase produces ATP from ADP in the presence of a proton or sodium gradient. F-type ATPases consist of two structural domains, F(1) containing the extramembraneous catalytic core and F(0) containing the membrane proton channel, linked together by a central stalk and a peripheral stalk. During catalysis, ATP synthesis in the catalytic domain of F(1) is coupled via a rotary mechanism of the central stalk subunits to proton translocation. Its function is as follows. Key component of the F(0) channel; it plays a direct role in translocation across the membrane. A homomeric c-ring of between 10-14 subunits forms the central stalk rotor element with the F(1) delta and epsilon subunits. This chain is ATP synthase subunit c, chloroplastic, found in Nephroselmis olivacea (Green alga).